The sequence spans 421 residues: MTVELEKIAGSFFISKGWKTFVHRTGLLSGQYIRFQVLTPSKINVLLFDKKKDSKLPMIPSSKKQIKTAPKRSTGITINDMPTSKHASMLISHTSNKETSSDSRTESMTDIPSSSDNSGETTRSFDDLCFCARNTAVTPDIKNYISIIGQFLQRSSKFYIVTMNNTFMKQDRLCKLSLLTNMLMCDVLTDTCRFTLPSFLMAFFQNTVQTQTLTTCADSPYPYEHLRKTEPACREIDEVTLTMCAHSPYPYEYLRKTELACREIDEVTTGASLSTNILPPYTSSPLEAISGGEDIWWLAASRMGWRGDVAAVQADSVDGNNSPFLCARSPTIGNGGADQPYLMVGKPHGWPCWGWDGAEMWLWCQSKNSGHCHIGWPVGVLVKGGRIYPGGGLPSKELAGMIGPYASGDWFELKRELPAKA.

The TF-B3 DNA-binding region spans 1 to 51; it reads MTVELEKIAGSFFISKGWKTFVHRTGLLSGQYIRFQVLTPSKINVLLFDKK. The interval 92–121 is disordered; the sequence is SHTSNKETSSDSRTESMTDIPSSSDNSGET. Residues 95-107 show a composition bias toward basic and acidic residues; it reads SNKETSSDSRTES. Over residues 108 to 121 the composition is skewed to polar residues; the sequence is MTDIPSSSDNSGET.

Its subcellular location is the nucleus. This is Putative B3 domain-containing protein Os08g0333500 from Oryza sativa subsp. japonica (Rice).